We begin with the raw amino-acid sequence, 615 residues long: Alpha-terpinene synthase TPS33PK, chloroplastic (615 aa).

Residues 1-33 (MFCRLGVHQFSPLSLILNTTKLARASTLSSACY) constitute a chloroplast transit peptide. The (2E)-geranyl diphosphate site is built by Glu334, Val371, Leu375, Leu513, and Ser516. Mg(2+) contacts are provided by Val371 and Leu375. The DDXXD motif signature appears at 371-375 (VYGTL). Residues Ser516, Met520, and Asp524 each contribute to the Mg(2+) site.

It belongs to the terpene synthase family. Tpsb subfamily. The cofactor is Mg(2+). Mn(2+) is required as a cofactor.

It localises to the plastid. The protein resides in the chloroplast. It catalyses the reaction (2E)-geranyl diphosphate = alpha-terpinene + diphosphate. It carries out the reaction (2E)-geranyl diphosphate = gamma-terpinene + diphosphate. It participates in secondary metabolite biosynthesis; terpenoid biosynthesis. Involved in monoterpene (C10) olefins biosynthesis, constituants of cannabinoids and terpenoids-rich resins. Catalyzes mainly the conversion of (2E)-geranyl diphosphate to alpha-terpinene and gamma-terpinene. The polypeptide is Alpha-terpinene synthase TPS33PK, chloroplastic (Cannabis sativa (Hemp)).